The primary structure comprises 501 residues: Myrosinase MA1 (501 aa).

Disulfide bonds link cysteine 6–cysteine 438, cysteine 14–cysteine 434, and cysteine 206–cysteine 214. An N-linked (GlcNAc...) asparagine glycan is attached at asparagine 21. Glutamine 39 is a substrate binding site. Residue histidine 56 coordinates Zn(2+). Asparagine 60 carries N-linked (GlcNAc...) asparagine glycosylation. Zn(2+) is bound at residue aspartate 70. A glycan (N-linked (GlcNAc...) asparagine) is linked at asparagine 90. Positions 141 and 186 each coordinate substrate. Residue glutamine 187 participates in L-ascorbate binding. Residues asparagine 218 and asparagine 244 are each glycosylated (N-linked (GlcNAc...) asparagine). Arginine 259 contacts L-ascorbate. Residues asparagine 265 and asparagine 292 are each glycosylated (N-linked (GlcNAc...) asparagine). Tyrosine 330 contributes to the substrate binding site. N-linked (GlcNAc...) asparagine glycans are attached at residues asparagine 343, asparagine 346, and asparagine 361. Glutamate 409 functions as the Nucleophile in the catalytic mechanism. Residues tryptophan 457 and 464–465 (EF) each bind substrate. Asparagine 482 carries an N-linked (GlcNAc...) asparagine glycan.

This sequence belongs to the glycosyl hydrolase 1 family. In terms of assembly, homodimer. As to expression, in vacuoles called myrosin grains of a certain class of cells, myrosin cells, distributed in the cotyledons and the axis of the embryo as well as in different organs of the growing plant.

The protein resides in the vacuole. The enzyme catalyses a thioglucoside + H2O = a sugar + a thiol.. In terms of biological role, degradation of glucosinolates (glucose residue linked by a thioglucoside bound to an amino acid derivative) to glucose, sulfate and any of the products: thiocyanates, isothiocyanates, nitriles, epithionitriles or oxazolidine-2-thiones. This Sinapis alba (White mustard) protein is Myrosinase MA1.